The chain runs to 384 residues: MDDFKVTPWDVEGVVDYNKLIEQFGTSPLTDELIEKTAELTKSELPLFFRRRFFFSHRDYDKVLADYESGRGFFLYTGRGPSGPMHIGHIIPFFATKWLQENFDVNLYIQITDDEKFLFKEKLSFEDTKRWAYENILDIIAVGFDPDKTFIFQNSEFTKIYEMALPIAKKINFSMARAVFGFNEQSKIGMIFYPAIQAAPTFFEKKRCLIPAAIDQDPYWRLQRDFAESLGYYKTAAIHSKFVPGLTSLEGKMSASKPETAVYLTDDPEEAGKKIWKFALTGGQPTLKEQREKGGNPEKCVVFKWFEIFFEPDDEKLMERYRACKAGELTCGQCKRELIERVQKFLKEHQKKRKEAEKKVEKFKYTGELAQEQWDKAIPEPLRT.

The short motif at 81–89 (PSGPMHIGH) is the 'HIGH' region element. The 'KMSKS' region signature appears at 252 to 256 (KMSAS).

This sequence belongs to the class-I aminoacyl-tRNA synthetase family.

It localises to the cytoplasm. The enzyme catalyses tRNA(Trp) + L-tryptophan + ATP = L-tryptophyl-tRNA(Trp) + AMP + diphosphate + H(+). The polypeptide is Tryptophan--tRNA ligase (Thermococcus kodakarensis (strain ATCC BAA-918 / JCM 12380 / KOD1) (Pyrococcus kodakaraensis (strain KOD1))).